We begin with the raw amino-acid sequence, 404 residues long: Probable glucan endo-1,6-beta-glucosidase B (404 aa).

The N-terminal stretch at M1–A20 is a signal peptide. N33 and N130 each carry an N-linked (GlcNAc...) asparagine glycan. Catalysis depends on E222, which acts as the Proton donor. N-linked (GlcNAc...) asparagine glycans are attached at residues N253 and N299. The active-site Nucleophile is the E324.

This sequence belongs to the glycosyl hydrolase 5 (cellulase A) family.

It localises to the secreted. It carries out the reaction Random hydrolysis of (1-&gt;6)-linkages in (1-&gt;6)-beta-D-glucans.. Functionally, beta-glucanases participate in the metabolism of beta-glucan, the main structural component of the cell wall. Acts on lutean, pustulan and 1,6-oligo-beta-D-glucosides. This chain is Probable glucan endo-1,6-beta-glucosidase B (exgB), found in Aspergillus terreus (strain NIH 2624 / FGSC A1156).